We begin with the raw amino-acid sequence, 60 residues long: Metallothionein (60 aa).

Positions 1–28 (MDPCECSKTGNCTCGGSCTCKNCSCTSC) are beta. Residues Cys4, Cys6, Cys12, Cys14, Cys18, Cys20, Cys23, Cys25, Cys28, Cys32, Cys33, Cys35, Cys36, Cys40, Cys43, Cys47, Cys49, Cys54, Cys58, and Cys59 each contribute to the a divalent metal cation site. Residues 29-60 (KKSCCSCCPSGCSKCASGCVCKGKTCDTSCCQ) form an alpha region.

It belongs to the metallothionein superfamily. Type 1 family.

Functionally, metallothioneins have a high content of cysteine residues that bind various heavy metals. In Gobiomorphus cotidianus (New Zealand common bully), this protein is Metallothionein (mt).